The chain runs to 466 residues: Ribulose bisphosphate carboxylase large chain (466 aa).

Lys4 bears the N6,N6,N6-trimethyllysine mark. The substrate site is built by Asn113 and Thr163. Lys165 serves as the catalytic Proton acceptor. Lys167 lines the substrate pocket. The Mg(2+) site is built by Lys191, Asp193, and Glu194. Position 191 is an N6-carboxylysine (Lys191). Residue His284 is the Proton acceptor of the active site. Residues Arg285, His317, and Ser369 each contribute to the substrate site.

Belongs to the RuBisCO large chain family. Type I subfamily. Heterohexadecamer of 8 large chains and 8 small chains; disulfide-linked. The disulfide link is formed within the large subunit homodimers. Mg(2+) serves as cofactor. Post-translationally, the disulfide bond which can form in the large chain dimeric partners within the hexadecamer appears to be associated with oxidative stress and protein turnover.

Its subcellular location is the plastid. It localises to the chloroplast. The catalysed reaction is 2 (2R)-3-phosphoglycerate + 2 H(+) = D-ribulose 1,5-bisphosphate + CO2 + H2O. It carries out the reaction D-ribulose 1,5-bisphosphate + O2 = 2-phosphoglycolate + (2R)-3-phosphoglycerate + 2 H(+). Its function is as follows. RuBisCO catalyzes two reactions: the carboxylation of D-ribulose 1,5-bisphosphate, the primary event in carbon dioxide fixation, as well as the oxidative fragmentation of the pentose substrate in the photorespiration process. Both reactions occur simultaneously and in competition at the same active site. The polypeptide is Ribulose bisphosphate carboxylase large chain (Justicia odora (Water willow)).